The sequence spans 485 residues: Proline--tRNA ligase (485 aa).

Belongs to the class-II aminoacyl-tRNA synthetase family. ProS type 3 subfamily. Homodimer.

It localises to the cytoplasm. It catalyses the reaction tRNA(Pro) + L-proline + ATP = L-prolyl-tRNA(Pro) + AMP + diphosphate. Its function is as follows. Catalyzes the attachment of proline to tRNA(Pro) in a two-step reaction: proline is first activated by ATP to form Pro-AMP and then transferred to the acceptor end of tRNA(Pro). The polypeptide is Proline--tRNA ligase (Methanopyrus kandleri (strain AV19 / DSM 6324 / JCM 9639 / NBRC 100938)).